The sequence spans 318 residues: 4-hydroxy-3-methylbut-2-enyl diphosphate reductase (318 aa).

C21 contributes to the [4Fe-4S] cluster binding site. (2E)-4-hydroxy-3-methylbut-2-enyl diphosphate contacts are provided by H50 and H83. Positions 50 and 83 each coordinate dimethylallyl diphosphate. Residues H50 and H83 each contribute to the isopentenyl diphosphate site. C105 contributes to the [4Fe-4S] cluster binding site. H133 serves as a coordination point for (2E)-4-hydroxy-3-methylbut-2-enyl diphosphate. Residue H133 participates in dimethylallyl diphosphate binding. H133 is an isopentenyl diphosphate binding site. Residue E135 is the Proton donor of the active site. Residue T176 participates in (2E)-4-hydroxy-3-methylbut-2-enyl diphosphate binding. Position 206 (C206) interacts with [4Fe-4S] cluster. The (2E)-4-hydroxy-3-methylbut-2-enyl diphosphate site is built by S234, S235, N236, and S278. Dimethylallyl diphosphate-binding residues include S234, S235, N236, and S278. Isopentenyl diphosphate is bound by residues S234, S235, N236, and S278.

Belongs to the IspH family. The cofactor is [4Fe-4S] cluster.

The enzyme catalyses isopentenyl diphosphate + 2 oxidized [2Fe-2S]-[ferredoxin] + H2O = (2E)-4-hydroxy-3-methylbut-2-enyl diphosphate + 2 reduced [2Fe-2S]-[ferredoxin] + 2 H(+). It carries out the reaction dimethylallyl diphosphate + 2 oxidized [2Fe-2S]-[ferredoxin] + H2O = (2E)-4-hydroxy-3-methylbut-2-enyl diphosphate + 2 reduced [2Fe-2S]-[ferredoxin] + 2 H(+). The protein operates within isoprenoid biosynthesis; dimethylallyl diphosphate biosynthesis; dimethylallyl diphosphate from (2E)-4-hydroxy-3-methylbutenyl diphosphate: step 1/1. Its pathway is isoprenoid biosynthesis; isopentenyl diphosphate biosynthesis via DXP pathway; isopentenyl diphosphate from 1-deoxy-D-xylulose 5-phosphate: step 6/6. Catalyzes the conversion of 1-hydroxy-2-methyl-2-(E)-butenyl 4-diphosphate (HMBPP) into a mixture of isopentenyl diphosphate (IPP) and dimethylallyl diphosphate (DMAPP). Acts in the terminal step of the DOXP/MEP pathway for isoprenoid precursor biosynthesis. The protein is 4-hydroxy-3-methylbut-2-enyl diphosphate reductase of Shewanella oneidensis (strain ATCC 700550 / JCM 31522 / CIP 106686 / LMG 19005 / NCIMB 14063 / MR-1).